Consider the following 344-residue polypeptide: Selenide, water dikinase (344 aa).

Selenocysteine 16 is a catalytic residue. Selenocysteine 16 is a non-standard amino acid (selenocysteine). Residues lysine 19 and 46–48 each bind ATP; that span reads TND. Mg(2+) is bound at residue aspartate 49. Residues aspartate 66, aspartate 89, and 135–137 each bind ATP; that span reads GHT. Aspartate 89 is a binding site for Mg(2+). Residue aspartate 223 coordinates Mg(2+).

Belongs to the selenophosphate synthase 1 family. Class I subfamily. In terms of assembly, homodimer. Requires Mg(2+) as cofactor.

It carries out the reaction hydrogenselenide + ATP + H2O = selenophosphate + AMP + phosphate + 2 H(+). Functionally, synthesizes selenophosphate from selenide and ATP. The protein is Selenide, water dikinase of Caldanaerobacter subterraneus subsp. tengcongensis (strain DSM 15242 / JCM 11007 / NBRC 100824 / MB4) (Thermoanaerobacter tengcongensis).